A 347-amino-acid chain; its full sequence is Lipoyl synthase (347 aa).

The [4Fe-4S] cluster site is built by Cys-55, Cys-60, Cys-66, Cys-81, Cys-85, Cys-88, and Ser-292. Residues 67–281 (WEDREATFLI…RDYGHDIGFA (215 aa)) form the Radical SAM core domain.

The protein belongs to the radical SAM superfamily. Lipoyl synthase family. The cofactor is [4Fe-4S] cluster.

It is found in the cytoplasm. The catalysed reaction is [[Fe-S] cluster scaffold protein carrying a second [4Fe-4S](2+) cluster] + N(6)-octanoyl-L-lysyl-[protein] + 2 oxidized [2Fe-2S]-[ferredoxin] + 2 S-adenosyl-L-methionine + 4 H(+) = [[Fe-S] cluster scaffold protein] + N(6)-[(R)-dihydrolipoyl]-L-lysyl-[protein] + 4 Fe(3+) + 2 hydrogen sulfide + 2 5'-deoxyadenosine + 2 L-methionine + 2 reduced [2Fe-2S]-[ferredoxin]. The protein operates within protein modification; protein lipoylation via endogenous pathway; protein N(6)-(lipoyl)lysine from octanoyl-[acyl-carrier-protein]: step 2/2. Functionally, catalyzes the radical-mediated insertion of two sulfur atoms into the C-6 and C-8 positions of the octanoyl moiety bound to the lipoyl domains of lipoate-dependent enzymes, thereby converting the octanoylated domains into lipoylated derivatives. This Corynebacterium kroppenstedtii (strain DSM 44385 / JCM 11950 / CIP 105744 / CCUG 35717) protein is Lipoyl synthase.